Reading from the N-terminus, the 483-residue chain is UDP-N-acetylmuramate--L-alanine ligase (483 aa).

ATP is bound at residue 128–134 (GTHGKTT).

This sequence belongs to the MurCDEF family.

It localises to the cytoplasm. The catalysed reaction is UDP-N-acetyl-alpha-D-muramate + L-alanine + ATP = UDP-N-acetyl-alpha-D-muramoyl-L-alanine + ADP + phosphate + H(+). Its pathway is cell wall biogenesis; peptidoglycan biosynthesis. Its function is as follows. Cell wall formation. The protein is UDP-N-acetylmuramate--L-alanine ligase of Shewanella violacea (strain JCM 10179 / CIP 106290 / LMG 19151 / DSS12).